The sequence spans 605 residues: Isocitrate dehydrogenase kinase/phosphatase (605 aa).

Residues 327 to 333 (APGIKGL) and Lys-348 each bind ATP. Asp-383 is a catalytic residue.

This sequence belongs to the AceK family.

The protein resides in the cytoplasm. The catalysed reaction is L-seryl-[isocitrate dehydrogenase] + ATP = O-phospho-L-seryl-[isocitrate dehydrogenase] + ADP + H(+). Bifunctional enzyme which can phosphorylate or dephosphorylate isocitrate dehydrogenase (IDH) on a specific serine residue. This is a regulatory mechanism which enables bacteria to bypass the Krebs cycle via the glyoxylate shunt in response to the source of carbon. When bacteria are grown on glucose, IDH is fully active and unphosphorylated, but when grown on acetate or ethanol, the activity of IDH declines drastically concomitant with its phosphorylation. The protein is Isocitrate dehydrogenase kinase/phosphatase of Burkholderia orbicola (strain AU 1054).